A 1009-amino-acid polypeptide reads, in one-letter code: Chitin synthase 2 (1009 aa).

2 stretches are compositionally biased toward polar residues: residues 1-12 (MSYNNPNNSNSH) and 34-62 (EFLNQRSNTPLTQGTYNYHNTSTNSLNFQ). Disordered regions lie at residues 1–62 (MSYN…LNFQ) and 175–234 (DESQ…EVRS). Residues 192–202 (EGEEEEEEGET) show a composition bias toward acidic residues. Helical transmembrane passes span 647–667 (WLNGSFFAAIYSLVHFYKVWT), 682–702 (FFYQLINLIVSWFSIGSYFLV), 722–742 (ILSVIFLWLYLASIVTTFVLS), 757–777 (IVIFFAILMAYMIFAAIFMAV), 804–823 (LVVATSSTYALYFLASFLYF), 930–950 (VLVWMFTNFVVIALVLETGGF), and 967–987 (AAVFLTVILWTVAFMALFRFI).

It belongs to the chitin synthase family.

It localises to the cell membrane. It catalyses the reaction [(1-&gt;4)-N-acetyl-beta-D-glucosaminyl](n) + UDP-N-acetyl-alpha-D-glucosamine = [(1-&gt;4)-N-acetyl-beta-D-glucosaminyl](n+1) + UDP + H(+). Functionally, polymerizes chitin, a structural polymer of the cell wall and septum, by transferring the sugar moiety of UDP-GlcNAc to the non-reducing end of the growing chitin polymer. This Candida albicans (Yeast) protein is Chitin synthase 2 (CHS2).